Reading from the N-terminus, the 270-residue chain is Phosphatidylglycerol--prolipoprotein diacylglyceryl transferase (270 aa).

Transmembrane regions (helical) follow at residues 18-38 (ITIY…LWLA), 55-75 (LVLF…VLFE), 90-110 (WQGG…GAVF), and 115-135 (GLSF…GQAI). R137 is a binding site for a 1,2-diacyl-sn-glycero-3-phospho-(1'-sn-glycerol). The next 3 helical transmembrane spans lie at 177-197 (HPTF…LLWL), 205-225 (GELF…IEGM), and 236-256 (LRAA…LWIV).

The protein belongs to the Lgt family.

Its subcellular location is the cell membrane. It carries out the reaction L-cysteinyl-[prolipoprotein] + a 1,2-diacyl-sn-glycero-3-phospho-(1'-sn-glycerol) = an S-1,2-diacyl-sn-glyceryl-L-cysteinyl-[prolipoprotein] + sn-glycerol 1-phosphate + H(+). The protein operates within protein modification; lipoprotein biosynthesis (diacylglyceryl transfer). In terms of biological role, catalyzes the transfer of the diacylglyceryl group from phosphatidylglycerol to the sulfhydryl group of the N-terminal cysteine of a prolipoprotein, the first step in the formation of mature lipoproteins. The polypeptide is Phosphatidylglycerol--prolipoprotein diacylglyceryl transferase (Geobacillus kaustophilus (strain HTA426)).